Consider the following 260-residue polypeptide: Snake venom serine protease salmobin (260 aa).

Residues 1–18 (MVLIKVLANHLILQLSYA) form the signal peptide. Residues 19–24 (QKSSEL) constitute a propeptide that is removed on maturation. The region spanning 25–251 (VIGGDECNIN…YTDWIQSIIA (227 aa)) is the Peptidase S1 domain. Disulfide bonds link Cys31-Cys165, Cys52-Cys68, Cys102-Cys258, Cys144-Cys212, Cys176-Cys191, and Cys202-Cys227. His67 acts as the Charge relay system in catalysis. N-linked (GlcNAc...) asparagine glycosylation occurs at Asn105. Asp112 (charge relay system) is an active-site residue. Residues Asn123 and Asn156 are each glycosylated (N-linked (GlcNAc...) asparagine). Ser206 functions as the Charge relay system in the catalytic mechanism.

The protein belongs to the peptidase S1 family. Snake venom subfamily. As to quaternary structure, monomer. Expressed by the venom gland.

The protein resides in the secreted. Its function is as follows. Snake venom serine protease that may act in the hemostasis system of the prey. The sequence is that of Snake venom serine protease salmobin from Gloydius halys (Chinese water mocassin).